Reading from the N-terminus, the 274-residue chain is Mitogen-activated protein kinase 4 (274 aa).

ATP-binding positions include 1-8 (GCGGNGLV) and lysine 23. The Protein kinase domain maps to 1–274 (GCGGNGLVLS…KILTFSPMDR (274 aa)). Aspartate 123 acts as the Proton acceptor in catalysis. Phosphoserine is present on serine 160. The SEG motif signature appears at 160–162 (SEG).

This sequence belongs to the protein kinase superfamily. CMGC Ser/Thr protein kinase family. MAP kinase subfamily. Homodimer. Heterodimer with ERK3/MAPK6. Interacts with MAPKAPK5. It depends on Mg(2+) as a cofactor. In terms of processing, phosphorylated by PAK1, PAK2 and PAK3 in the activation loop resulting in catalytic activation. Phosphorylated by MAPKAPK5 at other sites. Exclusively detected in the brain, where expression is restricted to the choroid plexus and hippocampus, and to a lesser extent in lung.

It is found in the cytoplasm. It localises to the nucleus. It catalyses the reaction L-seryl-[protein] + ATP = O-phospho-L-seryl-[protein] + ADP + H(+). The catalysed reaction is L-threonyl-[protein] + ATP = O-phospho-L-threonyl-[protein] + ADP + H(+). Its activity is regulated as follows. Activated by phosphorylation in the activation loop. Functionally, atypical MAPK protein. Phosphorylates microtubule-associated protein 2 (MAP2) and MAPKAPK5. The precise role of the complex formed with MAPKAPK5 is still unclear, but the complex follows a complex set of phosphorylation events: upon interaction with atypical MAPKAPK5, ERK4/MAPK4 is phosphorylated and then mediates phosphorylation and activation of MAPKAPK5, which in turn phosphorylates ERK4/MAPK4. May promote entry in the cell cycle. This Rattus norvegicus (Rat) protein is Mitogen-activated protein kinase 4 (Mapk4).